The primary structure comprises 375 residues: Putative monooxygenase Rv1533 (375 aa).

Residues Q190, G195, G224, and 243–246 (WCGS) each bind FMN.

The protein belongs to the nitronate monooxygenase family. It depends on FMN as a cofactor.

This Mycobacterium tuberculosis (strain ATCC 25618 / H37Rv) protein is Putative monooxygenase Rv1533.